A 213-amino-acid chain; its full sequence is Insulin-like peptide INSL6 (213 aa).

The N-terminal stretch at 1 to 20 is a signal peptide; that stretch reads MPRLLRLSLLWLGLLLVRFS. 3 disulfides stabilise this stretch: C33–C179, C45–C192, and C178–C183. Positions 55 to 168 are cleaved as a propeptide — connecting peptide; the sequence is FEEETPFSRL…SNLFWGHHPQ (114 aa). The propeptide occupies 201 to 213; sequence LKEKRSSLVTKIY.

This sequence belongs to the insulin family. As to expression, testis specific.

It is found in the secreted. May have a role in sperm development and fertilization. The chain is Insulin-like peptide INSL6 (INSL6) from Homo sapiens (Human).